Here is a 218-residue protein sequence, read N- to C-terminus: Putative pre-16S rRNA nuclease (218 aa).

The protein belongs to the YqgF nuclease family.

It localises to the cytoplasm. Its function is as follows. Could be a nuclease involved in processing of the 5'-end of pre-16S rRNA. The sequence is that of Putative pre-16S rRNA nuclease from Thermotoga maritima (strain ATCC 43589 / DSM 3109 / JCM 10099 / NBRC 100826 / MSB8).